Consider the following 206-residue polypeptide: tRNA(Phe) 7-((3-amino-3-carboxypropyl)-4-demethylwyosine(37)-N(4))-methyltransferase 2 (206 aa).

This sequence belongs to the TYW3 family.

The catalysed reaction is 4-demethyl-7-[(3S)-3-amino-3-carboxypropyl]wyosine(37) in tRNA(Phe) + S-adenosyl-L-methionine = 7-[(3S)-3-amino-3-carboxypropyl]wyosine(37) in tRNA(Phe) + S-adenosyl-L-homocysteine + H(+). Its function is as follows. S-adenosyl-L-methionine-dependent methyltransferase that acts as a component of the wyosine derivatives biosynthesis pathway. Probably methylates N-4 position of wybutosine-86 to produce wybutosine-72. This chain is tRNA(Phe) 7-((3-amino-3-carboxypropyl)-4-demethylwyosine(37)-N(4))-methyltransferase 2, found in Pyrococcus furiosus (strain ATCC 43587 / DSM 3638 / JCM 8422 / Vc1).